The following is a 370-amino-acid chain: MLRGNNIKKVNSLLVRSFHSTVGNRSGGPSTPINYPSLEIENAGEKQKMNLFQAINNGMDIAMQKDSKAVVFGEDVGFGGVFRCTVGLRDKYGASRVFNTPLCEQGIAGFAIGLAAQGATPIAEIQFADYIFPAFDQIVNEAAKYRYRSGGQFDCGSLTIRSPYGAVGHGGHYHSQSPESYFGHTPGLKVVIPSTPIEAKGLLLASIREKDPVIFFEPKLMYRSAVEEVPIGDYEIPLGKARIVKEGKDITIIGWGAQMRVLLQAVNMAEEKLGISCELIDLRTIQPWDVETVVESVKKTGRVVISHEAPKTGGWAAEISATIQERCFLHLEAPIQRVCGYDTPFPLIFEKFYVPDHLKNFESIKKTMVY.

Residues 1–25 (MLRGNNIKKVNSLLVRSFHSTVGNR) constitute a mitochondrion transit peptide. Tyr-130 contacts thiamine diphosphate. K(+) is bound by residues Gly-156, Leu-158, Thr-159, and Glu-209.

In terms of assembly, heterotetramer of 2 alpha and 2 beta chains. Thiamine diphosphate serves as cofactor.

It localises to the mitochondrion matrix. The enzyme catalyses N(6)-[(R)-lipoyl]-L-lysyl-[protein] + 3-methyl-2-oxobutanoate + H(+) = N(6)-[(R)-S(8)-2-methylpropanoyldihydrolipoyl]-L-lysyl-[protein] + CO2. In terms of biological role, the branched-chain alpha-keto dehydrogenase complex catalyzes the overall conversion of alpha-keto acids to acyl-CoA and CO(2). It contains multiple copies of three enzymatic components: branched-chain alpha-keto acid decarboxylase (E1), lipoamide acyltransferase (E2) and lipoamide dehydrogenase (E3). The polypeptide is 2-oxoisovalerate dehydrogenase subunit beta, mitochondrial (bkdB) (Dictyostelium discoideum (Social amoeba)).